We begin with the raw amino-acid sequence, 402 residues long: Ubiquitin-like modifier-activating enzyme 5 (402 aa).

ATP contacts are provided by Gly81, Asp102, Lys125, Asn148, and Asn182. Zn(2+) is bound by residues Cys224 and Cys227. Cys248 serves as the catalytic Glycyl thioester intermediate. Residues Cys301 and Cys306 each coordinate Zn(2+). A disordered region spans residues 369–402 (EAPEKSSETSEETVTTAPPDDASLEDLMAQMKSM).

This sequence belongs to the ubiquitin-activating E1 family. UBA5 subfamily.

Its function is as follows. E1-like enzyme which activates UFM1. In Drosophila erecta (Fruit fly), this protein is Ubiquitin-like modifier-activating enzyme 5.